We begin with the raw amino-acid sequence, 380 residues long: Glucose-1-phosphate adenylyltransferase (380 aa).

Alpha-D-glucose 1-phosphate contacts are provided by residues Tyr99, Gly164, 179 to 180 (EK), and Ser190.

It belongs to the bacterial/plant glucose-1-phosphate adenylyltransferase family. As to quaternary structure, homotetramer.

The enzyme catalyses alpha-D-glucose 1-phosphate + ATP + H(+) = ADP-alpha-D-glucose + diphosphate. It functions in the pathway glycan biosynthesis; glycogen biosynthesis. Functionally, involved in the biosynthesis of ADP-glucose, a building block required for the elongation reactions to produce glycogen. Catalyzes the reaction between ATP and alpha-D-glucose 1-phosphate (G1P) to produce pyrophosphate and ADP-Glc. This is Glucose-1-phosphate adenylyltransferase from Bacillus subtilis (strain 168).